The primary structure comprises 874 residues: Alanine--tRNA ligase (874 aa).

Zn(2+) contacts are provided by His563, His567, Cys665, and His669.

It belongs to the class-II aminoacyl-tRNA synthetase family. Requires Zn(2+) as cofactor.

The protein resides in the cytoplasm. The enzyme catalyses tRNA(Ala) + L-alanine + ATP = L-alanyl-tRNA(Ala) + AMP + diphosphate. Its function is as follows. Catalyzes the attachment of alanine to tRNA(Ala) in a two-step reaction: alanine is first activated by ATP to form Ala-AMP and then transferred to the acceptor end of tRNA(Ala). Also edits incorrectly charged Ser-tRNA(Ala) and Gly-tRNA(Ala) via its editing domain. The polypeptide is Alanine--tRNA ligase (Actinobacillus pleuropneumoniae serotype 7 (strain AP76)).